Here is a 118-residue protein sequence, read N- to C-terminus: Aspartate 1-decarboxylase 1 (118 aa).

The Schiff-base intermediate with substrate; via pyruvic acid role is filled by S25. The residue at position 25 (S25) is a Pyruvic acid (Ser). Residue T57 participates in substrate binding. Residue Y58 is the Proton donor of the active site. Substrate is bound at residue 73-75 (GAA).

Belongs to the PanD family. Heterooctamer of four alpha and four beta subunits. Pyruvate is required as a cofactor. Is synthesized initially as an inactive proenzyme, which is activated by self-cleavage at a specific serine bond to produce a beta-subunit with a hydroxyl group at its C-terminus and an alpha-subunit with a pyruvoyl group at its N-terminus.

The protein resides in the cytoplasm. The catalysed reaction is L-aspartate + H(+) = beta-alanine + CO2. The protein operates within cofactor biosynthesis; (R)-pantothenate biosynthesis; beta-alanine from L-aspartate: step 1/1. Its function is as follows. Catalyzes the pyruvoyl-dependent decarboxylation of aspartate to produce beta-alanine. The sequence is that of Aspartate 1-decarboxylase 1 from Gloeobacter violaceus (strain ATCC 29082 / PCC 7421).